The following is a 108-amino-acid chain: Small ribosomal subunit protein mS33 (108 aa).

Residues 84-108 (LRARDKGAPKKKRTAPSAADAKKKK) are disordered.

Belongs to the mitochondrion-specific ribosomal protein mS33 family. In terms of assembly, component of the mitochondrial small ribosomal subunit (mt-SSU). Mature N.crassa 74S mitochondrial ribosomes consist of a small (37S) and a large (54S) subunit. The 37S small subunit contains a 16S ribosomal RNA (16S mt-rRNA) and 32 different proteins. The 54S large subunit contains a 23S rRNA (23S mt-rRNA) and 42 different proteins.

The protein resides in the mitochondrion. Its function is as follows. Component of the mitochondrial ribosome (mitoribosome), a dedicated translation machinery responsible for the synthesis of mitochondrial genome-encoded proteins, including at least some of the essential transmembrane subunits of the mitochondrial respiratory chain. The mitoribosomes are attached to the mitochondrial inner membrane and translation products are cotranslationally integrated into the membrane. The protein is Small ribosomal subunit protein mS33 (rsm27) of Neurospora crassa (strain ATCC 24698 / 74-OR23-1A / CBS 708.71 / DSM 1257 / FGSC 987).